A 179-amino-acid chain; its full sequence is ATP-dependent protease subunit HslV (179 aa).

The active site involves Thr7. 3 residues coordinate Na(+): Gly162, Cys165, and Thr168.

Belongs to the peptidase T1B family. HslV subfamily. As to quaternary structure, a double ring-shaped homohexamer of HslV is capped on each side by a ring-shaped HslU homohexamer. The assembly of the HslU/HslV complex is dependent on binding of ATP.

It localises to the cytoplasm. The catalysed reaction is ATP-dependent cleavage of peptide bonds with broad specificity.. Its activity is regulated as follows. Allosterically activated by HslU binding. Its function is as follows. Protease subunit of a proteasome-like degradation complex believed to be a general protein degrading machinery. The protein is ATP-dependent protease subunit HslV of Teredinibacter turnerae (strain ATCC 39867 / T7901).